A 707-amino-acid polypeptide reads, in one-letter code: Complement C1r-A subcomponent (707 aa).

An N-terminal signal peptide occupies residues 1–16 (MWLFALLVTLFYGVEG). The 124-residue stretch at 17–140 (SIYLPQKLYG…KGFLAYYQAV (124 aa)) folds into the CUB 1 domain. Ca(2+)-binding residues include E65, D73, and D118. An intrachain disulfide couples C70 to C88. N124 carries an N-linked (GlcNAc...) asparagine glycan. Ca(2+)-binding residues include D141, L142, and E144. Positions 141–189 (DLDECASQPNSVEEGLQPRCQHLCHNYVGGYFCSCHPGYELQKDGQSCQ) constitute an EGF-like; calcium-binding domain. 4 disulfide bridges follow: C145-C164, C160-C173, C175-C188, and C192-C219. Positions 166, 167, and 170 each coordinate Ca(2+). The residue at position 166 (N166) is a (3R)-3-hydroxyasparagine. The region spanning 192–304 (CSSELYTEPS…RGWKLHYTTE (113 aa)) is the CUB 2 domain. Residue S205 is modified to Phosphoserine; by CK2. N-linked (GlcNAc...) asparagine glycosylation is present at N220. Ca(2+) contacts are provided by D242, D252, D289, and D293. C249 and C267 are disulfide-bonded. 2 consecutive Sushi domains span residues 306 to 372 (IKCP…RCKI) and 373 to 448 (KNCG…RCLP). Disulfide bonds link C308–C357, C337–C370, C375–C428, C405–C446, and C450–C579. Positions 463 to 704 (IIRGQPARPG…YVDWIKKEMG (242 aa)) constitute a Peptidase S1 domain. Active-site charge relay system residues include H501 and D559. N-linked (GlcNAc...) asparagine glycosylation is present at N583. 2 cysteine pairs are disulfide-bonded: C622/C641 and C652/C682. The active-site Charge relay system is S656.

The protein belongs to the peptidase S1 family. As to quaternary structure, core component of the complement C1 complex, a calcium-dependent complex composed of 1 molecule of the C1Q subcomplex, 2 molecules of C1R and 2 molecules of C1S. The C1Q subcomplex is composed 18 subunits: 3 chains of C1QA, C1QB, and C1QC trimerize to form 6 collagen-like triple helices connected to six globular ligand-recognition modules. Within the C1 complex, C1R is a dimer of identical chains, each of which is activated by cleavage into two chains, heavy and light, connected by disulfide bonds. Cleaved and activated by autocatalytic processing to generate Complement C1r subcomponent heavy and light chains that are connected by disulfide bonds. In terms of processing, the iron and 2-oxoglutarate dependent 3-hydroxylation of aspartate and asparagine is (R) stereospecific within EGF domains.

The protein resides in the secreted. Its subcellular location is the cell surface. It catalyses the reaction Selective cleavage of Lys(or Arg)-|-Ile bond in complement subcomponent C1s to form the active form of C1s (EC 3.4.21.42).. Its activity is regulated as follows. Activated by the C1Q subcomplex of the C1 complex following C1Q binding to immunoglobulins (IgG or IgM) complexed with antigens to form antigen-antibody complexes on the surface of pathogens. Immunoglobulin-binding promotes autoactivation of C1R, which results in the cleavage of the Arg-Ile bond in the catalytic domain. Functionally, serine protease component of the complement C1 complex, a multiprotein complex that initiates the classical pathway of the complement system, a cascade of proteins that leads to phagocytosis and breakdown of pathogens and signaling that strengthens the adaptive immune system. C1R catalyzes the first enzymatic step in the classical complement pathway: it is activated by the C1Q subcomplex of the C1 complex, which associates with IgG or IgM immunoglobulins complexed with antigens to form antigen-antibody complexes on the surface of pathogens. Immunoglobulin-binding promotes the autocatalytic cleavage and activation of C1R. Activated C1R then cleaves and activates C1S, the second protease of the classical complement pathway. It is unclear if C1R activates C1S within single, strained C1 complexes or between neighboring C1 complexes on surfaces. In Mus musculus (Mouse), this protein is Complement C1r-A subcomponent (C1ra).